The sequence spans 435 residues: tRNA(Ile)-lysidine synthase (435 aa).

Position 24-29 (24-29 (SGGLDS)) interacts with ATP.

The protein belongs to the tRNA(Ile)-lysidine synthase family.

The protein resides in the cytoplasm. It catalyses the reaction cytidine(34) in tRNA(Ile2) + L-lysine + ATP = lysidine(34) in tRNA(Ile2) + AMP + diphosphate + H(+). In terms of biological role, ligates lysine onto the cytidine present at position 34 of the AUA codon-specific tRNA(Ile) that contains the anticodon CAU, in an ATP-dependent manner. Cytidine is converted to lysidine, thus changing the amino acid specificity of the tRNA from methionine to isoleucine. This chain is tRNA(Ile)-lysidine synthase, found in Chromobacterium violaceum (strain ATCC 12472 / DSM 30191 / JCM 1249 / CCUG 213 / NBRC 12614 / NCIMB 9131 / NCTC 9757 / MK).